A 325-amino-acid chain; its full sequence is DNA-directed RNA polymerase subunit alpha (325 aa).

Positions 1-239 (MQQFLRYNIN…DHLKPLIDIN (239 aa)) are alpha N-terminal domain (alpha-NTD). The interval 255–325 (EKNKKLSIPI…ELYDLKLKNN (71 aa)) is alpha C-terminal domain (alpha-CTD).

Belongs to the RNA polymerase alpha chain family. In terms of assembly, homodimer. The RNAP catalytic core consists of 2 alpha, 1 beta, 1 beta' and 1 omega subunit. When a sigma factor is associated with the core the holoenzyme is formed, which can initiate transcription.

The enzyme catalyses RNA(n) + a ribonucleoside 5'-triphosphate = RNA(n+1) + diphosphate. DNA-dependent RNA polymerase catalyzes the transcription of DNA into RNA using the four ribonucleoside triphosphates as substrates. The protein is DNA-directed RNA polymerase subunit alpha of Mycoplasmoides gallisepticum (strain R(low / passage 15 / clone 2)) (Mycoplasma gallisepticum).